An 827-amino-acid polypeptide reads, in one-letter code: Cadherin-17 (827 aa).

Residues 1 to 21 (MVSAQLHFLCLLTLYLTGAYG) form the signal peptide. Residues 22-786 (QEGKFSGPLK…NQVGIPTVGM (765 aa)) are Extracellular-facing. Cadherin domains follow at residues 29 to 127 (PLKP…TFLQ), 128 to 243 (TKYE…APEP), 244 to 339 (VEIR…PPTC), 340 to 448 (LSQV…IPIF), 449 to 565 (ERSD…VPVF), 566 to 666 (PQQI…PPRL), and 667 to 776 (AKDY…RPAG). N-linked (GlcNAc...) asparagine glycans are attached at residues asparagine 148, asparagine 183, asparagine 249, asparagine 418, asparagine 545, asparagine 573, and asparagine 721. A helical transmembrane segment spans residues 787-807 (AVGILLTTFLVIGIILAVVFI). Residues 808–827 (RMRKDKVEDPQSPENKPLRS) lie on the Cytoplasmic side of the membrane.

As to expression, liver and intestine.

It is found in the cell membrane. Cadherins are calcium-dependent cell adhesion proteins. They preferentially interact with themselves in a homophilic manner in connecting cells; cadherins may thus contribute to the sorting of heterogeneous cell types. LI-cadherin may have a role in the morphological organization of liver and intestine. This Rattus norvegicus (Rat) protein is Cadherin-17 (Cdh17).